A 232-amino-acid chain; its full sequence is 5'-methylthioadenosine/S-adenosylhomocysteine nucleosidase (232 aa).

The active-site Proton acceptor is the Glu-12. Substrate is bound by residues Gly-78, Ile-152, and Met-173–Glu-174. Asp-197 serves as the catalytic Proton donor.

This sequence belongs to the PNP/UDP phosphorylase family. MtnN subfamily. As to quaternary structure, homodimer.

It carries out the reaction S-adenosyl-L-homocysteine + H2O = S-(5-deoxy-D-ribos-5-yl)-L-homocysteine + adenine. It catalyses the reaction S-methyl-5'-thioadenosine + H2O = 5-(methylsulfanyl)-D-ribose + adenine. The enzyme catalyses 5'-deoxyadenosine + H2O = 5-deoxy-D-ribose + adenine. It participates in amino-acid biosynthesis; L-methionine biosynthesis via salvage pathway; S-methyl-5-thio-alpha-D-ribose 1-phosphate from S-methyl-5'-thioadenosine (hydrolase route): step 1/2. Catalyzes the irreversible cleavage of the glycosidic bond in both 5'-methylthioadenosine (MTA) and S-adenosylhomocysteine (SAH/AdoHcy) to adenine and the corresponding thioribose, 5'-methylthioribose and S-ribosylhomocysteine, respectively. Also cleaves 5'-deoxyadenosine, a toxic by-product of radical S-adenosylmethionine (SAM) enzymes, into 5-deoxyribose and adenine. Thus, is required for in vivo function of the radical SAM enzymes biotin synthase and lipoic acid synthase, that are inhibited by 5'-deoxyadenosine accumulation. This chain is 5'-methylthioadenosine/S-adenosylhomocysteine nucleosidase, found in Salmonella enteritidis PT4 (strain P125109).